Here is an 861-residue protein sequence, read N- to C-terminus: Valine--tRNA ligase (861 aa).

Residues 42 to 52 carry the 'HIGH' region motif; that stretch reads PNITGRIHMGH. The 'KMSKS' region motif lies at 521–525; the sequence is KMSKS. Lys524 is a binding site for ATP. Residues 792 to 861 adopt a coiled-coil conformation; the sequence is VAGLNLQSEI…ILNQILGDLM (70 aa).

The protein belongs to the class-I aminoacyl-tRNA synthetase family. ValS type 1 subfamily. As to quaternary structure, monomer.

Its subcellular location is the cytoplasm. The enzyme catalyses tRNA(Val) + L-valine + ATP = L-valyl-tRNA(Val) + AMP + diphosphate. In terms of biological role, catalyzes the attachment of valine to tRNA(Val). As ValRS can inadvertently accommodate and process structurally similar amino acids such as threonine, to avoid such errors, it has a 'posttransfer' editing activity that hydrolyzes mischarged Thr-tRNA(Val) in a tRNA-dependent manner. The protein is Valine--tRNA ligase of Pseudothermotoga lettingae (strain ATCC BAA-301 / DSM 14385 / NBRC 107922 / TMO) (Thermotoga lettingae).